We begin with the raw amino-acid sequence, 408 residues long: Energy-coupling factor transporter ATP-binding protein EcfA1 (408 aa).

In terms of domain architecture, ABC transporter spans 140-374 (IEINHLSFKY…KDFLRNIQLD (235 aa)). 174–181 (GHNGSGKS) provides a ligand contact to ATP.

Belongs to the ABC transporter superfamily. Energy-coupling factor EcfA family. As to quaternary structure, forms a stable energy-coupling factor (ECF) transporter complex composed of 2 membrane-embedded substrate-binding proteins (S component), 2 ATP-binding proteins (A component) and 2 transmembrane proteins (T component).

The protein resides in the cell membrane. In terms of biological role, ATP-binding (A) component of a common energy-coupling factor (ECF) ABC-transporter complex. Unlike classic ABC transporters this ECF transporter provides the energy necessary to transport a number of different substrates. The polypeptide is Energy-coupling factor transporter ATP-binding protein EcfA1 (Mycoplasma mycoides subsp. mycoides SC (strain CCUG 32753 / NCTC 10114 / PG1)).